A 329-amino-acid polypeptide reads, in one-letter code: GTPase Obg (329 aa).

In terms of domain architecture, Obg spans 1-159; the sequence is MQFIDQACIS…WLLHLELKLL (159 aa). The OBG-type G domain occupies 160–328; it reads AEVGIIGLPN…LLKNVWEKLE (169 aa). ATP is bound by residues 166 to 173, 191 to 195, 213 to 216, 280 to 283, and 309 to 311; these read GLPNAGKS, FTTLI, DIPG, NKKE, and SAA. Residues Ser-173 and Thr-193 each contribute to the Mg(2+) site.

This sequence belongs to the TRAFAC class OBG-HflX-like GTPase superfamily. OBG GTPase family. In terms of assembly, monomer. It depends on Mg(2+) as a cofactor.

The protein localises to the cytoplasm. In terms of biological role, an essential GTPase which binds GTP, GDP and possibly (p)ppGpp with moderate affinity, with high nucleotide exchange rates and a fairly low GTP hydrolysis rate. Plays a role in control of the cell cycle, stress response, ribosome biogenesis and in those bacteria that undergo differentiation, in morphogenesis control. This Prochlorococcus marinus (strain MIT 9211) protein is GTPase Obg.